A 132-amino-acid polypeptide reads, in one-letter code: uncharacterized protein (132 aa).

Residues 1–69 (MNIGEAAKKS…LDEVGKLLTL (69 aa)) enclose the HTH merR-type domain. The segment at residues 4–23 (GEAAKKSGLTPKMIRYYESI) is a DNA-binding region (H-T-H motif).

It localises to the cytoplasm. This is an uncharacterized protein from Pseudomonas aeruginosa (strain ATCC 15692 / DSM 22644 / CIP 104116 / JCM 14847 / LMG 12228 / 1C / PRS 101 / PAO1).